The primary structure comprises 334 residues: Beta-ketoacyl-[acyl-carrier-protein] synthase III (334 aa).

Active-site residues include Cys-114 and His-253. The tract at residues 254–258 (QANIR) is ACP-binding. The active site involves Asn-283.

It belongs to the thiolase-like superfamily. FabH family. Homodimer.

It is found in the cytoplasm. It carries out the reaction malonyl-[ACP] + acetyl-CoA + H(+) = 3-oxobutanoyl-[ACP] + CO2 + CoA. It functions in the pathway lipid metabolism; fatty acid biosynthesis. Functionally, catalyzes the condensation reaction of fatty acid synthesis by the addition to an acyl acceptor of two carbons from malonyl-ACP. Catalyzes the first condensation reaction which initiates fatty acid synthesis and may therefore play a role in governing the total rate of fatty acid production. Possesses both acetoacetyl-ACP synthase and acetyl transacylase activities. Its substrate specificity determines the biosynthesis of branched-chain and/or straight-chain of fatty acids. This is Beta-ketoacyl-[acyl-carrier-protein] synthase III from Campylobacter curvus (strain 525.92).